A 261-amino-acid chain; its full sequence is Ribosomal RNA small subunit methyltransferase G (261 aa).

S-adenosyl-L-methionine-binding positions include Gly94, Leu99, 117–119, 145–146, and Arg164; these read EST and VE.

This sequence belongs to the methyltransferase superfamily. RNA methyltransferase RsmG family.

The protein resides in the cytoplasm. Its function is as follows. Specifically methylates the N7 position of a guanine in 16S rRNA. The sequence is that of Ribosomal RNA small subunit methyltransferase G from Rubrobacter xylanophilus (strain DSM 9941 / JCM 11954 / NBRC 16129 / PRD-1).